The chain runs to 347 residues: tRNA N6-adenosine threonylcarbamoyltransferase (347 aa).

H111 and H115 together coordinate Fe cation. Residues 134 to 138 (LVSGG), D167, G180, and N276 each bind substrate. Fe cation is bound at residue D304.

This sequence belongs to the KAE1 / TsaD family. The cofactor is Fe(2+).

The protein resides in the cytoplasm. The catalysed reaction is L-threonylcarbamoyladenylate + adenosine(37) in tRNA = N(6)-L-threonylcarbamoyladenosine(37) in tRNA + AMP + H(+). Required for the formation of a threonylcarbamoyl group on adenosine at position 37 (t(6)A37) in tRNAs that read codons beginning with adenine. Is involved in the transfer of the threonylcarbamoyl moiety of threonylcarbamoyl-AMP (TC-AMP) to the N6 group of A37, together with TsaE and TsaB. TsaD likely plays a direct catalytic role in this reaction. The protein is tRNA N6-adenosine threonylcarbamoyltransferase of Nitrosospira multiformis (strain ATCC 25196 / NCIMB 11849 / C 71).